The following is a 155-amino-acid chain: Desiccation-related protein clone PCC6-19 (155 aa).

The segment at 1-155 is disordered; it reads MAQFGGEKYG…IKEKLPGGQH (155 aa). Composition is skewed to gly residues over residues 27–39 and 47–76; these read AHRGGGIMGGGQQ and GVLGHGTAGQHGTTGGGLGHGTAGTGGALG. The segment covering 83–92 has biased composition (low complexity); sequence GSSSSSSSSE. Residues 118–135 are compositionally biased toward polar residues; it reads TTTDQQQYGTAATHGQAQ. Positions 136-155 are enriched in basic and acidic residues; that stretch reads QHEKKGIMDKIKEKLPGGQH.

The protein belongs to the plant dehydrin family.

The chain is Desiccation-related protein clone PCC6-19 from Craterostigma plantagineum (Blue gem).